The primary structure comprises 89 residues: Small ribosomal subunit protein uS15 (89 aa).

The protein belongs to the universal ribosomal protein uS15 family. Part of the 30S ribosomal subunit. Forms a bridge to the 50S subunit in the 70S ribosome, contacting the 23S rRNA.

Its function is as follows. One of the primary rRNA binding proteins, it binds directly to 16S rRNA where it helps nucleate assembly of the platform of the 30S subunit by binding and bridging several RNA helices of the 16S rRNA. In terms of biological role, forms an intersubunit bridge (bridge B4) with the 23S rRNA of the 50S subunit in the ribosome. In Bifidobacterium longum subsp. infantis (strain ATCC 15697 / DSM 20088 / JCM 1222 / NCTC 11817 / S12), this protein is Small ribosomal subunit protein uS15.